A 307-amino-acid polypeptide reads, in one-letter code: Putative oxidoreductase YceM (307 aa).

The protein belongs to the Gfo/Idh/MocA family.

The polypeptide is Putative oxidoreductase YceM (yceM) (Escherichia coli (strain K12)).